A 422-amino-acid chain; its full sequence is 5'-deoxyadenosine deaminase (422 aa).

Positions 57 and 59 each coordinate Zn(2+). Residues glutamate 86 and histidine 178 each contribute to the substrate site. Histidine 205 is a Zn(2+) binding site. The substrate site is built by glutamate 208 and aspartate 294. Aspartate 294 provides a ligand contact to Zn(2+).

This sequence belongs to the metallo-dependent hydrolases superfamily. MTA/SAH deaminase family. Homotetramer. Zn(2+) serves as cofactor.

The enzyme catalyses 5'-deoxyadenosine + H2O + H(+) = 5'-deoxyinosine + NH4(+). It carries out the reaction S-adenosyl-L-homocysteine + H2O + H(+) = S-inosyl-L-homocysteine + NH4(+). It catalyses the reaction S-methyl-5'-thioadenosine + H2O + H(+) = S-methyl-5'-thioinosine + NH4(+). The catalysed reaction is adenosine + H2O + H(+) = inosine + NH4(+). Its pathway is amino-acid biosynthesis; S-adenosyl-L-methionine biosynthesis. Functionally, catalyzes the deamination of three SAM-derived enzymatic products, namely 5'-deoxyadenosine, S-adenosyl-L-homocysteine, and 5'-methylthioadenosine, to produce the inosine analogs. Can also deaminate adenosine. The preferred substrate for this enzyme is 5'-deoxyadenosine, but all these substrates are efficiently deaminated. Likely functions in a S-adenosyl-L-methionine (SAM) recycling pathway from S-adenosyl-L-homocysteine (SAH) produced from SAM-dependent methylation reactions. May also be involved in the recycling of 5'-deoxyadenosine, whereupon the 5'-deoxyribose moiety of 5'-deoxyinosine is further metabolized to deoxyhexoses used for the biosynthesis of aromatic amino acids in methanogens. This chain is 5'-deoxyadenosine deaminase, found in Methanococcus maripaludis (strain C6 / ATCC BAA-1332).